Reading from the N-terminus, the 318-residue chain is Transaldolase (318 aa).

The Schiff-base intermediate with substrate role is filled by Lys132.

Belongs to the transaldolase family. Type 1 subfamily. As to quaternary structure, homodimer.

It is found in the cytoplasm. It carries out the reaction D-sedoheptulose 7-phosphate + D-glyceraldehyde 3-phosphate = D-erythrose 4-phosphate + beta-D-fructose 6-phosphate. It participates in carbohydrate degradation; pentose phosphate pathway; D-glyceraldehyde 3-phosphate and beta-D-fructose 6-phosphate from D-ribose 5-phosphate and D-xylulose 5-phosphate (non-oxidative stage): step 2/3. In terms of biological role, transaldolase is important for the balance of metabolites in the pentose-phosphate pathway. This chain is Transaldolase, found in Shewanella sp. (strain MR-4).